A 461-amino-acid chain; its full sequence is Photosystem II CP43 reaction center protein (461 aa).

The next 5 helical transmembrane spans lie at 57-81 (LFEVAHFVPEKPMYEQGIILLSHLA), 122-143 (LRGPESLEEYSTFFSQDWKDKN), 166-188 (KAMFFGGVYDTWAPGGGDVRIIS), 243-263 (KPFGWVRRAFIWNGEAYLSYS), and 279-300 (WYNNTVYPSEFFGPTAAEASQS). Residue E355 participates in [CaMn4O5] cluster binding. Residues 435–459 (RARAAAAGFEKGIDRATEPVLAMRD) traverse the membrane as a helical segment.

It belongs to the PsbB/PsbC family. PsbC subfamily. As to quaternary structure, PSII is composed of 1 copy each of membrane proteins PsbA, PsbB, PsbC, PsbD, PsbE, PsbF, PsbH, PsbI, PsbJ, PsbK, PsbL, PsbM, PsbT, PsbX, PsbY, PsbZ, Psb30/Ycf12, peripheral proteins PsbO, CyanoQ (PsbQ), PsbU, PsbV and a large number of cofactors. It forms dimeric complexes. It depends on Binds multiple chlorophylls and provides some of the ligands for the Ca-4Mn-5O cluster of the oxygen-evolving complex. It may also provide a ligand for a Cl- that is required for oxygen evolution. PSII binds additional chlorophylls, carotenoids and specific lipids. as a cofactor.

It is found in the cellular thylakoid membrane. Its function is as follows. One of the components of the core complex of photosystem II (PSII). It binds chlorophyll and helps catalyze the primary light-induced photochemical processes of PSII. PSII is a light-driven water:plastoquinone oxidoreductase, using light energy to abstract electrons from H(2)O, generating O(2) and a proton gradient subsequently used for ATP formation. The chain is Photosystem II CP43 reaction center protein from Synechococcus elongatus (strain ATCC 33912 / PCC 7942 / FACHB-805) (Anacystis nidulans R2).